We begin with the raw amino-acid sequence, 435 residues long: uncharacterized protein (435 aa).

11 helical membrane-spanning segments follow: residues 9–29 (IIVL…ITFA), 57–77 (VGLD…GNIM), 110–130 (TLFG…GGIM), 146–166 (AINV…VLIV), 176–196 (VAAL…ALMT), 226–246 (LPSL…VFTP), 280–300 (VVTS…SWAM), 321–341 (WVIL…MDIT), 343–363 (AILI…IDPV), 367–387 (IIMV…TILF), and 408–428 (FLAL…SLLL).

Belongs to the YiaN/YgiK family.

It is found in the cell inner membrane. This is an uncharacterized protein from Salmonella typhimurium (strain LT2 / SGSC1412 / ATCC 700720).